The following is a 500-amino-acid chain: NAD(P)H-quinone oxidoreductase chain 4, chloroplastic (500 aa).

14 consecutive transmembrane segments (helical) span residues 4 to 24 (FYWL…IALL), 37 to 57 (ICIC…HFQL), 80 to 100 (LGID…TTLA), 113 to 130 (LFHF…GLFS), 134 to 154 (LLLF…LLSM), 167 to 187 (FILY…GMGL), 208 to 228 (ALEI…SPII), 242 to 262 (HYST…YGLV), 272 to 292 (AHSI…IYAA), 305 to 325 (IAYS…SITD), 330 to 350 (GAIL…FLAG), 386 to 406 (LALP…GIIT), 416 to 436 (ILIT…SLSM), and 462 to 482 (IFIL…PDFV).

Belongs to the complex I subunit 4 family.

Its subcellular location is the plastid. The protein resides in the chloroplast thylakoid membrane. It carries out the reaction a plastoquinone + NADH + (n+1) H(+)(in) = a plastoquinol + NAD(+) + n H(+)(out). The catalysed reaction is a plastoquinone + NADPH + (n+1) H(+)(in) = a plastoquinol + NADP(+) + n H(+)(out). The protein is NAD(P)H-quinone oxidoreductase chain 4, chloroplastic of Nuphar advena (Common spatterdock).